Here is a 390-residue protein sequence, read N- to C-terminus: Outer membrane protein assembly factor BamB (390 aa).

The first 25 residues, 1 to 25, serve as a signal peptide directing secretion; sequence MPVLRDRIPRRGFFLGLALLAALSG. A lipid anchor (N-palmitoyl cysteine) is attached at Cys26. The S-diacylglycerol cysteine moiety is linked to residue Cys26.

The protein belongs to the BamB family. In terms of assembly, part of the Bam complex.

The protein localises to the cell outer membrane. Its function is as follows. Part of the outer membrane protein assembly complex, which is involved in assembly and insertion of beta-barrel proteins into the outer membrane. The protein is Outer membrane protein assembly factor BamB of Marinobacter adhaerens (strain DSM 23420 / HP15).